We begin with the raw amino-acid sequence, 477 residues long: Dihydrolipoyl dehydrogenase (477 aa).

FAD is bound by residues 41-50 (EKRGALGGTC), lysine 59, glycine 124, and 153-155 (TGS). Cysteines 50 and 55 form a disulfide. NAD(+)-binding positions include 190 to 197 (GGGVIGLE), glutamate 213, valine 248, and glycine 282. FAD contacts are provided by residues aspartate 323 and 330 to 333 (MLAH). Residue histidine 456 is the Proton acceptor of the active site.

This sequence belongs to the class-I pyridine nucleotide-disulfide oxidoreductase family. As to quaternary structure, homodimer. FAD serves as cofactor.

It catalyses the reaction N(6)-[(R)-dihydrolipoyl]-L-lysyl-[protein] + NAD(+) = N(6)-[(R)-lipoyl]-L-lysyl-[protein] + NADH + H(+). The sequence is that of Dihydrolipoyl dehydrogenase (LPD) from Trypanosoma cruzi.